The sequence spans 414 residues: Succinylornithine transaminase (414 aa).

Lysine 260 carries the post-translational modification N6-(pyridoxal phosphate)lysine.

It belongs to the class-III pyridoxal-phosphate-dependent aminotransferase family. AstC subfamily. It depends on pyridoxal 5'-phosphate as a cofactor.

It catalyses the reaction N(2)-succinyl-L-ornithine + 2-oxoglutarate = N-succinyl-L-glutamate 5-semialdehyde + L-glutamate. Its pathway is amino-acid degradation; L-arginine degradation via AST pathway; L-glutamate and succinate from L-arginine: step 3/5. Functionally, catalyzes the transamination of N(2)-succinylornithine and alpha-ketoglutarate into N(2)-succinylglutamate semialdehyde and glutamate. Can also act as an acetylornithine aminotransferase. This is Succinylornithine transaminase from Yersinia pseudotuberculosis serotype O:1b (strain IP 31758).